Reading from the N-terminus, the 241-residue chain is 7-cyano-7-deazaguanine synthase (241 aa).

9-19 serves as a coordination point for ATP; the sequence is LSGGLDSSTVL. Zn(2+) is bound by residues cysteine 189, cysteine 197, cysteine 200, and cysteine 203.

Belongs to the QueC family. Zn(2+) is required as a cofactor.

The enzyme catalyses 7-carboxy-7-deazaguanine + NH4(+) + ATP = 7-cyano-7-deazaguanine + ADP + phosphate + H2O + H(+). The protein operates within purine metabolism; 7-cyano-7-deazaguanine biosynthesis. Functionally, catalyzes the ATP-dependent conversion of 7-carboxy-7-deazaguanine (CDG) to 7-cyano-7-deazaguanine (preQ(0)). In Thermoplasma volcanium (strain ATCC 51530 / DSM 4299 / JCM 9571 / NBRC 15438 / GSS1), this protein is 7-cyano-7-deazaguanine synthase.